The sequence spans 275 residues: Lincomycin biosynthesis protein LmbN (275 aa).

Residues 1–78 (MSTLDEVLAL…AIAATVARIT (78 aa)) enclose the Carrier domain. At serine 37 the chain carries O-(pantetheine 4'-phosphoryl)serine. The 163-residue stretch at 113–275 (LFDTWHAGGT…HHALCVAHAP (163 aa)) folds into the SIS domain.

The protein operates within antibiotic biosynthesis; lincomycin biosynthesis. The sequence is that of Lincomycin biosynthesis protein LmbN (lmbN) from Streptomyces lincolnensis.